A 314-amino-acid chain; its full sequence is Ribosomal RNA small subunit methyltransferase H (314 aa).

Residues 36-38, D56, F80, D102, and Q109 contribute to the S-adenosyl-L-methionine site; that span reads GGH. The disordered stretch occupies residues 278 to 300; that stretch reads GGRSLKSIGKMKPSEEEVADNPR. The span at 289-300 shows a compositional bias: basic and acidic residues; it reads KPSEEEVADNPR.

Belongs to the methyltransferase superfamily. RsmH family.

Its subcellular location is the cytoplasm. The enzyme catalyses cytidine(1402) in 16S rRNA + S-adenosyl-L-methionine = N(4)-methylcytidine(1402) in 16S rRNA + S-adenosyl-L-homocysteine + H(+). Functionally, specifically methylates the N4 position of cytidine in position 1402 (C1402) of 16S rRNA. This Photorhabdus laumondii subsp. laumondii (strain DSM 15139 / CIP 105565 / TT01) (Photorhabdus luminescens subsp. laumondii) protein is Ribosomal RNA small subunit methyltransferase H.